The following is a 504-amino-acid chain: Myocilin (504 aa).

The N-terminal stretch at Met1–Ala32 is a signal peptide. Residue Asn57 is glycosylated (N-linked (GlcNAc...) asparagine). Positions Leu74–Gln184 form a coiled coil. Disordered regions lie at residues Gln106–Leu131 and Leu170–Arg200. Basic and acidic residues predominate over residues Gly122–Leu131. The Olfactomedin-like domain occupies Gly244–Lys503. Residues Cys245 and Cys433 are joined by a disulfide bond. The Ca(2+) site is built by Asp380, Asn428, Ala429, Ile477, and Asp478. The Microbody targeting signal motif lies at Ser502–Met504.

Homodimer (via N-terminus). Can also form higher oligomers. Interacts with OLFM3, FN1, NRCAM, GLDN and NFASC. Interacts (via N-terminus) with MYL2. Interacts with SFRP1, FRZB, FZD7, FZD10, FZD1 and WIF1; regulates Wnt signaling. Interacts with SNTA1; regulates muscle hypertrophy. Interacts with ERBB2 and ERBB3; activates ERBB2-ERBB3 signaling pathway. Interacts with SNCG; affects its secretion and its aggregation. Different isoforms may arise by post-translational modifications. In terms of processing, glycosylated. Post-translationally, palmitoylated. Undergoes a calcium-dependent proteolytic cleavage at Arg-226 by CAPN2 in the endoplasmic reticulum. The result is the production of two fragments, one of 35 kDa containing the C-terminal olfactomedin-like domain, and another of 20 kDa containing the N-terminal leucine zipper-like domain. Detected in aqueous humor. Detected in the eye (at protein level). Widely expressed. Highly expressed in various types of muscle, ciliary body, papillary sphincter, skeletal muscle, heart, and bone marrow-derived mesenchymal stem cells. Expressed predominantly in the retina. In normal eyes, found in the inner uveal meshwork region and the anterior portion of the meshwork. In contrast, in many glaucomatous eyes, it is found in more regions of the meshwork and seems to be expressed at higher levels than in normal eyes, regardless of the type or clinical severity of glaucoma. The myocilin 35 kDa fragment is detected in aqueous humor and to a lesser extent in iris and ciliary body.

It localises to the secreted. It is found in the golgi apparatus. The protein localises to the cytoplasmic vesicle. Its subcellular location is the extracellular space. The protein resides in the extracellular matrix. It localises to the extracellular exosome. It is found in the mitochondrion. The protein localises to the mitochondrion intermembrane space. Its subcellular location is the mitochondrion inner membrane. The protein resides in the mitochondrion outer membrane. It localises to the rough endoplasmic reticulum. It is found in the cell projection. The protein localises to the cilium. Its subcellular location is the endoplasmic reticulum. Functionally, secreted glycoprotein regulating the activation of different signaling pathways in adjacent cells to control different processes including cell adhesion, cell-matrix adhesion, cytoskeleton organization and cell migration. Promotes substrate adhesion, spreading and formation of focal contacts. Negatively regulates cell-matrix adhesion and stress fiber assembly through Rho protein signal transduction. Modulates the organization of actin cytoskeleton by stimulating the formation of stress fibers through interactions with components of Wnt signaling pathways. Promotes cell migration through activation of PTK2 and the downstream phosphatidylinositol 3-kinase signaling. Plays a role in bone formation and promotes osteoblast differentiation in a dose-dependent manner through mitogen-activated protein kinase signaling. Mediates myelination in the peripheral nervous system through ERBB2/ERBB3 signaling. Plays a role as a regulator of muscle hypertrophy through the components of dystrophin-associated protein complex. Involved in positive regulation of mitochondrial depolarization. Plays a role in neurite outgrowth. May participate in the obstruction of fluid outflow in the trabecular meshwork. This is Myocilin (MYOC) from Homo sapiens (Human).